The following is a 530-amino-acid chain: Bifunctional purine biosynthesis protein PurH (530 aa).

The MGS-like domain maps to 1–148; sequence MNNARPIRRA…KNHKDVTIVV (148 aa).

This sequence belongs to the PurH family.

The catalysed reaction is (6R)-10-formyltetrahydrofolate + 5-amino-1-(5-phospho-beta-D-ribosyl)imidazole-4-carboxamide = 5-formamido-1-(5-phospho-D-ribosyl)imidazole-4-carboxamide + (6S)-5,6,7,8-tetrahydrofolate. It carries out the reaction IMP + H2O = 5-formamido-1-(5-phospho-D-ribosyl)imidazole-4-carboxamide. The protein operates within purine metabolism; IMP biosynthesis via de novo pathway; 5-formamido-1-(5-phospho-D-ribosyl)imidazole-4-carboxamide from 5-amino-1-(5-phospho-D-ribosyl)imidazole-4-carboxamide (10-formyl THF route): step 1/1. Its pathway is purine metabolism; IMP biosynthesis via de novo pathway; IMP from 5-formamido-1-(5-phospho-D-ribosyl)imidazole-4-carboxamide: step 1/1. The protein is Bifunctional purine biosynthesis protein PurH of Aliivibrio fischeri (strain ATCC 700601 / ES114) (Vibrio fischeri).